Here is a 74-residue protein sequence, read N- to C-terminus: uncharacterized protein (74 aa).

A helical transmembrane segment spans residues 7-26 (IHLYVMASAMSSSPIFFFFQ).

It is found in the membrane. This is an uncharacterized protein from Homo sapiens (Human).